An 800-amino-acid polypeptide reads, in one-letter code: Nucleolar complex protein 3 homolog (800 aa).

2 disordered regions span residues 27-93 and 160-187; these read KLKN…DMMD and GIIP…RELE. A compositionally biased stretch (basic residues) spans 40 to 51; that stretch reads KKYRKEQRKLRQ. The segment covering 66–78 has biased composition (basic and acidic residues); the sequence is NPKEKRPGKRIER. A compositionally biased stretch (acidic residues) spans 79-93; sequence EEEEEEEALPLDMMD. The segment covering 160–174 has biased composition (basic and acidic residues); the sequence is GIIPQTREKPVTDSN. Residues 175–187 show a composition bias toward acidic residues; it reads KDEEDQEEERELE. K333 is covalently cross-linked (Glycyl lysine isopeptide (Lys-Gly) (interchain with G-Cter in SUMO2)). Residues 451–490 are a coiled coil; sequence KEKRKSLSRMQRKWKKAEEKLERELREAEASESTEKKLKL. At S787 the chain carries Phosphoserine.

It belongs to the CBF/MAK21 family. As to expression, expressed in colon, heart, kidney, liver, lung, placenta, skeletal muscle, small intestine, spleen and thymus.

Its subcellular location is the nucleus. It is found in the nucleolus. The protein localises to the nucleus speckle. Its function is as follows. May be required for adipogenesis. The polypeptide is Nucleolar complex protein 3 homolog (NOC3L) (Homo sapiens (Human)).